A 333-amino-acid polypeptide reads, in one-letter code: Fructose-1,6-bisphosphatase class 1 (333 aa).

Mg(2+) is bound by residues glutamate 92, aspartate 113, leucine 115, and aspartate 116. Residues aspartate 116–serine 119, asparagine 209, tyrosine 242, and lysine 272 each bind substrate. Residue glutamate 278 participates in Mg(2+) binding.

It belongs to the FBPase class 1 family. In terms of assembly, homotetramer. Requires Mg(2+) as cofactor.

It is found in the cytoplasm. It catalyses the reaction beta-D-fructose 1,6-bisphosphate + H2O = beta-D-fructose 6-phosphate + phosphate. Its pathway is carbohydrate biosynthesis; Calvin cycle. This Chlorobium chlorochromatii (strain CaD3) protein is Fructose-1,6-bisphosphatase class 1.